A 586-amino-acid polypeptide reads, in one-letter code: CTP synthase (586 aa).

The amidoligase domain stretch occupies residues 1 to 278; the sequence is MRKHPQTATK…DAFVVRRLNL (278 aa). CTP is bound at residue Ser20. Ser20 is a binding site for UTP. Residues 21–26 and Asp78 each bind ATP; that span reads SLGKGL. 2 residues coordinate Mg(2+): Asp78 and Glu152. CTP-binding positions include 159-161, 199-204, and Lys235; these read DIE and KTKPTQ. UTP is bound by residues 199-204 and Lys235; that span reads KTKPTQ. The 249-residue stretch at 303 to 551 folds into the Glutamine amidotransferase type-1 domain; sequence RIALVGKYVE…VGAAIDYKAG (249 aa). Gly366 is a binding site for L-glutamine. Catalysis depends on Cys393, which acts as the Nucleophile; for glutamine hydrolysis. Residues 394-397, Glu416, and Arg477 each bind L-glutamine; that span reads LGLQ. Residues His524 and Glu526 contribute to the active site. The segment at 560 to 586 is disordered; sequence EIPEHTPNGSSHRDGVGQPLPEPASRG.

Belongs to the CTP synthase family. As to quaternary structure, homotetramer.

The enzyme catalyses UTP + L-glutamine + ATP + H2O = CTP + L-glutamate + ADP + phosphate + 2 H(+). It carries out the reaction L-glutamine + H2O = L-glutamate + NH4(+). The catalysed reaction is UTP + NH4(+) + ATP = CTP + ADP + phosphate + 2 H(+). Its pathway is pyrimidine metabolism; CTP biosynthesis via de novo pathway; CTP from UDP: step 2/2. With respect to regulation, allosterically activated by GTP, when glutamine is the substrate; GTP has no effect on the reaction when ammonia is the substrate. The allosteric effector GTP functions by stabilizing the protein conformation that binds the tetrahedral intermediate(s) formed during glutamine hydrolysis. Inhibited by the product CTP, via allosteric rather than competitive inhibition. Functionally, catalyzes the ATP-dependent amination of UTP to CTP with either L-glutamine or ammonia as the source of nitrogen. Regulates intracellular CTP levels through interactions with the four ribonucleotide triphosphates. The sequence is that of CTP synthase from Mycobacterium tuberculosis (strain CDC 1551 / Oshkosh).